The chain runs to 587 residues: L-ascorbate oxidase (587 aa).

The first 33 residues, 1–33 (MAKVADKPFFPKPFLSFLVLSIIFGFGITLSEA), serve as a signal peptide directing secretion. 2 consecutive Plastocyanin-like domains span residues 38–157 (IKHY…LIVD) and 169–335 (DEEI…NYLP). 3 disulfide bridges follow: Cys-54/Cys-236, Cys-116/Cys-574, and Cys-215/Cys-228. Residues His-95, His-97, His-139, and His-141 each contribute to the Cu cation site. N-linked (GlcNAc...) asparagine glycans are attached at residues Asn-360, Asn-401, and Asn-475. Residues 379–559 (NRRLFLLNTQ…HMGMGVVFAE (181 aa)) form the Plastocyanin-like 3 domain. Cu cation contacts are provided by His-480, His-483, His-485, His-542, Cys-543, His-544, His-548, and Met-553.

The protein belongs to the multicopper oxidase family. As to quaternary structure, dimer. Requires Cu cation as cofactor.

It localises to the secreted. The catalysed reaction is 4 L-ascorbate + O2 = 4 monodehydro-L-ascorbate radical + 2 H2O. In terms of biological role, may be involved in a redox system involving ascorbic acid. This Cucumis sativus (Cucumber) protein is L-ascorbate oxidase.